Consider the following 303-residue polypeptide: Probable cell division protein WhiA (303 aa).

Residues 272 to 303 constitute a DNA-binding region (H-T-H motif); it reads SIQQLADSLSTPLTKSGVNHRLRKINKIADEL.

The protein belongs to the WhiA family.

Functionally, involved in cell division and chromosome segregation. This chain is Probable cell division protein WhiA, found in Streptococcus pneumoniae (strain Hungary19A-6).